Reading from the N-terminus, the 98-residue chain is RNA-binding protein Hfq (98 aa).

In terms of domain architecture, Sm spans 11–71; sequence DVFLNHVRRS…ISTVMPATPV (61 aa).

It belongs to the Hfq family. Homohexamer.

In terms of biological role, RNA chaperone that binds small regulatory RNA (sRNAs) and mRNAs to facilitate mRNA translational regulation in response to envelope stress, environmental stress and changes in metabolite concentrations. Also binds with high specificity to tRNAs. The polypeptide is RNA-binding protein Hfq (Gluconacetobacter diazotrophicus (strain ATCC 49037 / DSM 5601 / CCUG 37298 / CIP 103539 / LMG 7603 / PAl5)).